The following is a 71-amino-acid chain: Disintegrin applaggin (71 aa).

The region spanning 1 to 71 (EAGEECDCGS…SAGCPRNPFH (71 aa)) is the Disintegrin domain. 6 disulfides stabilise this stretch: Cys-6/Cys-21, Cys-8/Cys-16, Cys-15/Cys-38, Cys-29/Cys-35, Cys-34/Cys-58, and Cys-47/Cys-65. A Cell attachment site motif is present at residues 50-52 (RGD).

This sequence belongs to the venom metalloproteinase (M12B) family. P-II subfamily. P-IIa sub-subfamily. As to quaternary structure, monomer (disintegrin). As to expression, expressed by the venom gland.

It is found in the secreted. Functionally, inhibits fibrinogen interaction with platelets. Acts by binding to alpha-IIb/beta-3 (ITGA2B/ITGB3) on the platelet surface and inhibits aggregation induced by ADP, thrombin, platelet-activating factor and collagen. The chain is Disintegrin applaggin from Agkistrodon piscivorus piscivorus (Eastern cottonmouth).